Reading from the N-terminus, the 376-residue chain is N-acetyldiaminopimelate deacetylase (376 aa).

Residue Asp69 is part of the active site. Glu128 functions as the Proton acceptor in the catalytic mechanism.

It belongs to the peptidase M20A family. N-acetyldiaminopimelate deacetylase subfamily.

The catalysed reaction is N-acetyl-(2S,6S)-2,6-diaminopimelate + H2O = (2S,6S)-2,6-diaminopimelate + acetate. The protein operates within amino-acid biosynthesis; L-lysine biosynthesis via DAP pathway; LL-2,6-diaminopimelate from (S)-tetrahydrodipicolinate (acetylase route): step 3/3. In terms of biological role, catalyzes the conversion of N-acetyl-diaminopimelate to diaminopimelate and acetate. The protein is N-acetyldiaminopimelate deacetylase of Bacillus cytotoxicus (strain DSM 22905 / CIP 110041 / 391-98 / NVH 391-98).